A 579-amino-acid chain; its full sequence is Arginine--tRNA ligase (579 aa).

Residues 127 to 137 carry the 'HIGH' region motif; the sequence is PNLAKEMHVGH.

Belongs to the class-I aminoacyl-tRNA synthetase family. As to quaternary structure, monomer.

The protein localises to the cytoplasm. It catalyses the reaction tRNA(Arg) + L-arginine + ATP = L-arginyl-tRNA(Arg) + AMP + diphosphate. The protein is Arginine--tRNA ligase of Stutzerimonas stutzeri (strain A1501) (Pseudomonas stutzeri).